A 249-amino-acid chain; its full sequence is Small ribosomal subunit protein eS6 (249 aa).

Disordered regions lie at residues 161–181 (PLAKEGKKPRTKAPKIQRLVT) and 194–249 (LKKQ…SSQK). Basic and acidic residues predominate over residues 216–229 (RSKEAKEKRQEQIA). Ser-235, Ser-236, Ser-240, Ser-244, and Ser-247 each carry phosphoserine. A compositionally biased stretch (low complexity) spans 236-249 (SLRASTSKSESSQK).

This sequence belongs to the eukaryotic ribosomal protein eS6 family. In terms of assembly, component of the small ribosomal subunit. Part of the small subunit (SSU) processome, composed of more than 70 proteins and the RNA chaperone small nucleolar RNA (snoRNA) U3. Post-translationally, ribosomal protein S6 is the major substrate of protein kinases in eukaryote ribosomes. The phosphorylation is stimulated by growth factors, tumor promoting agents, and mitogens. It is dephosphorylated at growth arrest.

The protein resides in the cytoplasm. Its subcellular location is the nucleus. The protein localises to the nucleolus. In terms of biological role, component of the 40S small ribosomal subunit. Plays an important role in controlling cell growth and proliferation through the selective translation of particular classes of mRNA. Part of the small subunit (SSU) processome, first precursor of the small eukaryotic ribosomal subunit. During the assembly of the SSU processome in the nucleolus, many ribosome biogenesis factors, an RNA chaperone and ribosomal proteins associate with the nascent pre-rRNA and work in concert to generate RNA folding, modifications, rearrangements and cleavage as well as targeted degradation of pre-ribosomal RNA by the RNA exosome. The polypeptide is Small ribosomal subunit protein eS6 (rps6) (Xenopus laevis (African clawed frog)).